Here is a 364-residue protein sequence, read N- to C-terminus: RNA-binding protein ZC3H11 (364 aa).

The C3H1-type zinc-finger motif lies at 64 to 92; that stretch reads RYKTKLCKNFVQYGTCPYDIRCMFAHGEE. The MKT1-binding motif signature appears at 194–199; that stretch reads VRHNPY. The interval 340–364 is disordered; it reads EQSQSHLKREGNEGRGEGLHMFLSL. A compositionally biased stretch (basic and acidic residues) spans 346-357; sequence LKREGNEGRGEG.

Interacts (via MKT1-binding motif) with MKT1. Interacts with PBP1 (via C-terminus); the interaction is direct. Post-translationally, phosphorylated at the N-terminus. CK1.2-dependent phosphorylation may lead to proteasome-dependent degradation of ZC3H11 in absence of stress.

The protein localises to the cytoplasm. RNA-binding protein involved in regulation of mRNA stability. Binds AU-rich regions in the 3'-UTR of mRNAs and promotes their stabilization by recruiting a MKT1-containing complex. Stabilizes chaperone mRNAs during stress that causes an accumulation of misfolded or unfolded proteins in the cytoplasm. This is RNA-binding protein ZC3H11 from Trypanosoma brucei brucei (strain 927/4 GUTat10.1).